A 354-amino-acid chain; its full sequence is Peptide chain release factor 1 (354 aa).

An N5-methylglutamine modification is found at Gln-230.

Belongs to the prokaryotic/mitochondrial release factor family. Methylated by PrmC. Methylation increases the termination efficiency of RF1.

It localises to the cytoplasm. Its function is as follows. Peptide chain release factor 1 directs the termination of translation in response to the peptide chain termination codons UAG and UAA. In Leptospira interrogans serogroup Icterohaemorrhagiae serovar copenhageni (strain Fiocruz L1-130), this protein is Peptide chain release factor 1.